We begin with the raw amino-acid sequence, 336 residues long: Delta(1)-pyrroline-2-carboxylate reductase (336 aa).

S47 (charge relay system) is an active-site residue. The active-site Proton donor is H48. R52 is a binding site for substrate. 120–124 (HFSAL) is an NADP(+) binding site. Position 160 (T160) interacts with substrate. An NADP(+)-binding site is contributed by 178-180 (DFA). 186-187 (RG) is a substrate binding site. The active-site Charge relay system is D188. NADP(+) contacts are provided by residues 229–230 (HK) and 304–310 (RLPSQRR).

It belongs to the LDH2/MDH2 oxidoreductase family. In terms of assembly, homodimer.

It catalyses the reaction L-proline + NAD(+) = 1-pyrroline-2-carboxylate + NADH + H(+). The catalysed reaction is L-proline + NADP(+) = 1-pyrroline-2-carboxylate + NADPH + H(+). Its function is as follows. Catalyzes the reduction of Delta(1)-pyrroline-2-carboxylate (Pyr2C) to L-proline, using NADPH as the electron donor. May be involved in a degradation pathway that converts trans-3-hydroxy-L-proline (t3LHyp) to L-proline. The polypeptide is Delta(1)-pyrroline-2-carboxylate reductase (Pseudomonas fluorescens (strain ATCC BAA-477 / NRRL B-23932 / Pf-5)).